Consider the following 196-residue polypeptide: Large ribosomal subunit protein uL14my (196 aa).

The transit peptide at 1–62 (MATALASKLS…TILKCVDNSC (62 aa)) directs the protein to the mitochondrion. The interval 148–175 (EKKGQNNSHGSKRKMEYNQPTGTRVFGP) is disordered.

This sequence belongs to the universal ribosomal protein uL14 family. In terms of assembly, part of the mitochondrial 50S ribosomal subunit. Mostly expressed in pistils and inflorescences, including floral organs and meristems, and, to a lower extent, in leaves.

It is found in the mitochondrion. Its function is as follows. Binds to 23S rRNA in mitochondrion. Required for the formation of the proximal region of the ovule primordium during floral organogenesis, thus participating in patterning and growth of ovule. Also regulates the initiation and/or maintenance of integument and embryo sac ontogenesis. Prevents inappropriate cell death in the young ovule. The sequence is that of Large ribosomal subunit protein uL14my (HLL) from Arabidopsis thaliana (Mouse-ear cress).